We begin with the raw amino-acid sequence, 226 residues long: Cytidylate kinase (226 aa).

9 to 17 (GPAGAGKST) serves as a coordination point for ATP.

Belongs to the cytidylate kinase family. Type 1 subfamily.

The protein resides in the cytoplasm. The catalysed reaction is CMP + ATP = CDP + ADP. It carries out the reaction dCMP + ATP = dCDP + ADP. The protein is Cytidylate kinase of Clostridium tetani (strain Massachusetts / E88).